Here is a 532-residue protein sequence, read N- to C-terminus: UDP-N-acetylmuramyl-tripeptide synthetase (532 aa).

UDP-N-acetyl-alpha-D-muramoyl-L-alanyl-D-glutamate is bound at residue S34. An ATP-binding site is contributed by 127–133; sequence GTEGKSS. UDP-N-acetyl-alpha-D-muramoyl-L-alanyl-D-glutamate contacts are provided by residues 171–172, S198, and R208; that span reads TT. Residue K240 is modified to N6-carboxylysine.

The protein belongs to the MurCDEF family. MurE subfamily. Post-translationally, carboxylation is probably crucial for Mg(2+) binding and, consequently, for the gamma-phosphate positioning of ATP.

It localises to the cytoplasm. The protein operates within cell wall biogenesis; peptidoglycan biosynthesis. In terms of biological role, catalyzes the addition of an amino acid to the nucleotide precursor UDP-N-acetylmuramoyl-L-alanyl-D-glutamate (UMAG) in the biosynthesis of bacterial cell-wall peptidoglycan. This is UDP-N-acetylmuramyl-tripeptide synthetase from Treponema denticola (strain ATCC 35405 / DSM 14222 / CIP 103919 / JCM 8153 / KCTC 15104).